Consider the following 132-residue polypeptide: Inclusion membrane protein E (132 aa).

Transmembrane regions (helical) follow at residues L41–V61 and F66–A86.

It is found in the secreted. The protein localises to the host vacuole. Its subcellular location is the host pathogen-containing vacuole. The protein resides in the host pathogen-containing vacuole membrane. Its function is as follows. Inclusion membrane protein probably involved in early modification events of the chlamydial inclusion. In Chlamydia trachomatis serovar L2 (strain ATCC VR-902B / DSM 19102 / 434/Bu), this protein is Inclusion membrane protein E.